We begin with the raw amino-acid sequence, 658 residues long: Putative endo-beta-N-acetylglucosaminidase (658 aa).

A signal peptide spans 1–23 (MKKVRFIFLALLFFLASPEGAMA). 13 Cell wall-binding repeats span residues 42–63 (ANEW…DANY), 65–84 (ENEW…GGYM), 86–105 (KSEW…DGKM), 124–145 (IEDW…DGQH), 147–166 (EKEW…GGYL), 185–206 (QQGW…NGNY), 208–227 (DKEW…GGYM), 229–248 (ANEW…DGKM), 250–271 (EKEW…GGYM), 273–292 (ANEW…DGKI), 294–315 (EKEW…GGYM), 317–336 (ANEW…DGKI), and 338–359 (EKEW…GGYM).

This sequence belongs to the glycosyl hydrolase 73 family.

It is found in the secreted. The enzyme catalyses an N(4)-(oligosaccharide-(1-&gt;3)-[oligosaccharide-(1-&gt;6)]-beta-D-Man-(1-&gt;4)-beta-D-GlcNAc-(1-&gt;4)-alpha-D-GlcNAc)-L-asparaginyl-[protein] + H2O = an oligosaccharide-(1-&gt;3)-[oligosaccharide-(1-&gt;6)]-beta-D-Man-(1-&gt;4)-D-GlcNAc + N(4)-(N-acetyl-beta-D-glucosaminyl)-L-asparaginyl-[protein]. Its function is as follows. Plays an important role in cell wall degradation and cell separation. The protein is Putative endo-beta-N-acetylglucosaminidase (lytB) of Streptococcus pneumoniae serotype 4 (strain ATCC BAA-334 / TIGR4).